The sequence spans 251 residues: DNA repair protein RecO (251 aa).

It belongs to the RecO family.

In terms of biological role, involved in DNA repair and RecF pathway recombination. In Acetivibrio thermocellus (strain ATCC 27405 / DSM 1237 / JCM 9322 / NBRC 103400 / NCIMB 10682 / NRRL B-4536 / VPI 7372) (Clostridium thermocellum), this protein is DNA repair protein RecO.